Consider the following 105-residue polypeptide: Replication restart protein PriB (105 aa).

Residues 1-102 (MTANRLTLSG…LHAEQIELID (102 aa)) enclose the SSB domain.

Belongs to the PriB family. As to quaternary structure, homodimer. Interacts with PriA and DnaT. Component of the replication restart primosome. Primosome assembly occurs via a 'hand-off' mechanism. PriA binds to replication forks, subsequently PriB then DnaT bind; DnaT then displaces ssDNA to generate the helicase loading substrate.

Involved in the restart of stalled replication forks, which reloads the replicative helicase on sites other than the origin of replication; the PriA-PriB pathway is the major replication restart pathway. During primosome assembly it facilitates complex formation between PriA and DnaT on DNA; stabilizes PriA on DNA. Stimulates the DNA unwinding activity of PriA helicase. This chain is Replication restart protein PriB, found in Erwinia tasmaniensis (strain DSM 17950 / CFBP 7177 / CIP 109463 / NCPPB 4357 / Et1/99).